The primary structure comprises 863 residues: Alanine--tRNA ligase (863 aa).

Residues His-552, His-556, Cys-654, and His-658 each contribute to the Zn(2+) site.

Belongs to the class-II aminoacyl-tRNA synthetase family. Zn(2+) serves as cofactor.

The protein localises to the cytoplasm. It carries out the reaction tRNA(Ala) + L-alanine + ATP = L-alanyl-tRNA(Ala) + AMP + diphosphate. In terms of biological role, catalyzes the attachment of alanine to tRNA(Ala) in a two-step reaction: alanine is first activated by ATP to form Ala-AMP and then transferred to the acceptor end of tRNA(Ala). Also edits incorrectly charged Ser-tRNA(Ala) and Gly-tRNA(Ala) via its editing domain. This Nitrosomonas europaea (strain ATCC 19718 / CIP 103999 / KCTC 2705 / NBRC 14298) protein is Alanine--tRNA ligase.